The primary structure comprises 637 residues: tRNA uridine 5-carboxymethylaminomethyl modification enzyme MnmG (637 aa).

G18–G23 is an FAD binding site. NAD(+) is bound at residue G281–F295.

Belongs to the MnmG family. In terms of assembly, homodimer. Heterotetramer of two MnmE and two MnmG subunits. The cofactor is FAD.

The protein localises to the cytoplasm. Its function is as follows. NAD-binding protein involved in the addition of a carboxymethylaminomethyl (cmnm) group at the wobble position (U34) of certain tRNAs, forming tRNA-cmnm(5)s(2)U34. The protein is tRNA uridine 5-carboxymethylaminomethyl modification enzyme MnmG of Ligilactobacillus salivarius (strain UCC118) (Lactobacillus salivarius).